Reading from the N-terminus, the 426-residue chain is Histidine--tRNA ligase (426 aa).

Belongs to the class-II aminoacyl-tRNA synthetase family. As to quaternary structure, homodimer.

Its subcellular location is the cytoplasm. It carries out the reaction tRNA(His) + L-histidine + ATP = L-histidyl-tRNA(His) + AMP + diphosphate + H(+). The protein is Histidine--tRNA ligase of Streptococcus gordonii (strain Challis / ATCC 35105 / BCRC 15272 / CH1 / DL1 / V288).